The primary structure comprises 207 residues: MADLSTLARPYAKAAFDYANENGAVNEWEDFLFVAATVVNDKSFSTWLDNPAVSAEHKSAALVDLYDTQVASANDSAFKQLLDANKGVRPDSNASYSKVSVAFSNFVKQLSEQERLALLPEVYEHYRRHKAVSLKQLDAYVTSAYPLTDDQRDMLQARLAASLNASVVIHESVDASLLAGVTIKVGDKVIDDSMRGKLQQLKTQLTA.

It belongs to the ATPase delta chain family. As to quaternary structure, F-type ATPases have 2 components, F(1) - the catalytic core - and F(0) - the membrane proton channel. F(1) has five subunits: alpha(3), beta(3), gamma(1), delta(1), epsilon(1). F(0) has three main subunits: a(1), b(2) and c(10-14). The alpha and beta chains form an alternating ring which encloses part of the gamma chain. F(1) is attached to F(0) by a central stalk formed by the gamma and epsilon chains, while a peripheral stalk is formed by the delta and b chains.

The protein resides in the cell inner membrane. Functionally, f(1)F(0) ATP synthase produces ATP from ADP in the presence of a proton or sodium gradient. F-type ATPases consist of two structural domains, F(1) containing the extramembraneous catalytic core and F(0) containing the membrane proton channel, linked together by a central stalk and a peripheral stalk. During catalysis, ATP synthesis in the catalytic domain of F(1) is coupled via a rotary mechanism of the central stalk subunits to proton translocation. This protein is part of the stalk that links CF(0) to CF(1). It either transmits conformational changes from CF(0) to CF(1) or is implicated in proton conduction. The protein is ATP synthase subunit delta of Psychrobacter cryohalolentis (strain ATCC BAA-1226 / DSM 17306 / VKM B-2378 / K5).